A 123-amino-acid polypeptide reads, in one-letter code: Protein Wnt-7 (123 aa).

Ser1 is lipidated: O-palmitoleoyl serine; by PORCN. N-linked (GlcNAc...) asparagine glycosylation is found at Asn79 and Asn90. Cys89 and Cys104 are oxidised to a cystine.

The protein belongs to the Wnt family. Palmitoleoylation is required for efficient binding to frizzled receptors. Depalmitoleoylation leads to Wnt signaling pathway inhibition.

The protein resides in the secreted. Its subcellular location is the extracellular space. It localises to the extracellular matrix. Ligand for members of the frizzled family of seven transmembrane receptors. Probable developmental protein. May be a signaling molecule which affects the development of discrete regions of tissues. Is likely to signal over only few cell diameters. The protein is Protein Wnt-7 (WNT-7) of Strongylocentrotus purpuratus (Purple sea urchin).